The chain runs to 640 residues: Chaperone protein DnaK (640 aa).

Thr-201 carries the phosphothreonine; by autocatalysis modification. Low complexity predominate over residues 603 to 621 (AASADQGGAPGADAGNAGK). The segment at 603 to 625 (AASADQGGAPGADAGNAGKAQDD) is disordered.

The protein belongs to the heat shock protein 70 family.

Functionally, acts as a chaperone. This chain is Chaperone protein DnaK, found in Stenotrophomonas maltophilia (strain K279a).